The sequence spans 473 residues: tRNA modification GTPase MnmE (473 aa).

Arg-30, Glu-95, and Arg-134 together coordinate (6S)-5-formyl-5,6,7,8-tetrahydrofolate. Residues 230 to 394 (GVAAVIAGRP…LKSTMAGMVE (165 aa)) enclose the TrmE-type G domain. Residues 240–245 (NAGKST), 259–265 (SHMPGTT), and 284–287 (DTAG) each bind GTP. Residues Ser-244 and Thr-265 each coordinate Mg(2+). Lys-473 serves as a coordination point for (6S)-5-formyl-5,6,7,8-tetrahydrofolate.

The protein belongs to the TRAFAC class TrmE-Era-EngA-EngB-Septin-like GTPase superfamily. TrmE GTPase family. Homodimer. Heterotetramer of two MnmE and two MnmG subunits. Requires K(+) as cofactor.

The protein resides in the cytoplasm. Exhibits a very high intrinsic GTPase hydrolysis rate. Involved in the addition of a carboxymethylaminomethyl (cmnm) group at the wobble position (U34) of certain tRNAs, forming tRNA-cmnm(5)s(2)U34. The chain is tRNA modification GTPase MnmE from Chlorobium phaeovibrioides (strain DSM 265 / 1930) (Prosthecochloris vibrioformis (strain DSM 265)).